The primary structure comprises 1025 residues: DNA polymerase (1025 aa).

Belongs to the DNA polymerase type-B family.

The enzyme catalyses DNA(n) + a 2'-deoxyribonucleoside 5'-triphosphate = DNA(n+1) + diphosphate. In terms of biological role, replicates the viral genome. Host DNA polymerases cannot substitute for the viral enzyme in this process. The sequence is that of DNA polymerase from Noctuidae (owlet moths).